The sequence spans 241 residues: Carboxy-S-adenosyl-L-methionine synthase (241 aa).

Residues Tyr-38, 63–65 (GCS), 88–89 (DN), 116–117 (DI), Asn-131, and Arg-198 each bind S-adenosyl-L-methionine.

This sequence belongs to the class I-like SAM-binding methyltransferase superfamily. Cx-SAM synthase family. In terms of assembly, homodimer.

The enzyme catalyses prephenate + S-adenosyl-L-methionine = carboxy-S-adenosyl-L-methionine + 3-phenylpyruvate + H2O. Its function is as follows. Catalyzes the conversion of S-adenosyl-L-methionine (SAM) to carboxy-S-adenosyl-L-methionine (Cx-SAM). The polypeptide is Carboxy-S-adenosyl-L-methionine synthase (Pseudoalteromonas translucida (strain TAC 125)).